The sequence spans 337 residues: Porphobilinogen deaminase (337 aa).

Cysteine 254 is subject to S-(dipyrrolylmethanemethyl)cysteine.

Belongs to the HMBS family. Dipyrromethane is required as a cofactor.

It catalyses the reaction 4 porphobilinogen + H2O = hydroxymethylbilane + 4 NH4(+). It participates in porphyrin-containing compound metabolism; protoporphyrin-IX biosynthesis; coproporphyrinogen-III from 5-aminolevulinate: step 2/4. In terms of biological role, tetrapolymerization of the monopyrrole PBG into the hydroxymethylbilane pre-uroporphyrinogen in several discrete steps. This is Porphobilinogen deaminase (pda-1) from Neurospora crassa (strain ATCC 24698 / 74-OR23-1A / CBS 708.71 / DSM 1257 / FGSC 987).